A 780-amino-acid polypeptide reads, in one-letter code: ATP-dependent 6-phosphofructokinase, liver type (780 aa).

Ala2 is subject to N-acetylalanine. Positions 2–390 are N-terminal catalytic PFK domain 1; that stretch reads AAVDLEKLRA…NWNIYKLLAH (389 aa). Residues Gly25, 88–89, and 118–121 each bind ATP; these read RC and GDGS. Asp119 is a binding site for Mg(2+). Residues 164–166, Arg201, 208–210, Glu264, Arg292, and 298–301 contribute to the substrate site; these read SID, MGR, and HVQR. Residue Asp166 is the Proton acceptor of the active site. Ser377 carries the post-translational modification Phosphoserine. Positions 391–400 are interdomain linker; it reads QKPPKEKSNF. The interval 401–780 is C-terminal regulatory PFK domain 2; the sequence is SLAILNVGAP…RRTLSMDKGF (380 aa). Residues Arg470, 527 to 531, Arg565, 572 to 574, and Glu628 contribute to the beta-D-fructose 2,6-bisphosphate site; these read TISNN and MGG. Ser529 carries an O-linked (GlcNAc) serine glycan. The residue at position 640 (Tyr640) is a Phosphotyrosine. Beta-D-fructose 2,6-bisphosphate contacts are provided by residues Arg654, 660-663, and Arg734; that span reads HLQQ. Ser775 is modified (phosphoserine).

Belongs to the phosphofructokinase type A (PFKA) family. ATP-dependent PFK group I subfamily. Eukaryotic two domain clade 'E' sub-subfamily. As to quaternary structure, homo- and heterotetramers. Phosphofructokinase (PFK) enzyme functions as a tetramer composed of different combinations of 3 types of subunits, called PFKM (where M stands for Muscle), PFKL (Liver) and PFKP (Platelet). The composition of the PFK tetramer differs according to the tissue type it is present in. In muscles, it is composed of 4 PFKM subunits (also called M4). In the liver, the predominant form is a tetramer of PFKL subunits (L4). In erythrocytes, both PFKM and PFKL subunits randomly tetramerize to form M4, L4 and other combinations (ML3, M2L2, M3L). The kinetic and regulatory properties of the tetrameric enzyme are dependent on the subunit composition, hence can vary across tissues. It depends on Mg(2+) as a cofactor. Post-translationally, glcNAcylation at Ser-529 by OGT decreases enzyme activity, leading to redirect glucose flux through the oxidative pentose phosphate pathway. Glycosylation is stimulated by both hypoxia and glucose deprivation.

The protein localises to the cytoplasm. It carries out the reaction beta-D-fructose 6-phosphate + ATP = beta-D-fructose 1,6-bisphosphate + ADP + H(+). It functions in the pathway carbohydrate degradation; glycolysis; D-glyceraldehyde 3-phosphate and glycerone phosphate from D-glucose: step 3/4. Allosterically activated by ADP, AMP, or fructose 2,6-bisphosphate, and allosterically inhibited by ATP or citrate. GlcNAcylation by OGT overcomes allosteric regulation. Its function is as follows. Catalyzes the phosphorylation of D-fructose 6-phosphate to fructose 1,6-bisphosphate by ATP, the first committing step of glycolysis. Negatively regulates the phagocyte oxidative burst in response to bacterial infection by controlling cellular NADPH biosynthesis and NADPH oxidase-derived reactive oxygen species. Upon macrophage activation, drives the metabolic switch toward glycolysis, thus preventing glucose turnover that produces NADPH via pentose phosphate pathway. The protein is ATP-dependent 6-phosphofructokinase, liver type of Homo sapiens (Human).